The chain runs to 417 residues: UDP-N-acetylglucosamine 1-carboxyvinyltransferase (417 aa).

A phosphoenolpyruvate-binding site is contributed by Lys22 to Asn23. Residue Arg92 coordinates UDP-N-acetyl-alpha-D-glucosamine. The active-site Proton donor is Cys116. 2-(S-cysteinyl)pyruvic acid O-phosphothioketal is present on Cys116. UDP-N-acetyl-alpha-D-glucosamine-binding residues include Asp304 and Ile326.

Belongs to the EPSP synthase family. MurA subfamily.

It localises to the cytoplasm. It catalyses the reaction phosphoenolpyruvate + UDP-N-acetyl-alpha-D-glucosamine = UDP-N-acetyl-3-O-(1-carboxyvinyl)-alpha-D-glucosamine + phosphate. Its pathway is cell wall biogenesis; peptidoglycan biosynthesis. Its function is as follows. Cell wall formation. Adds enolpyruvyl to UDP-N-acetylglucosamine. The chain is UDP-N-acetylglucosamine 1-carboxyvinyltransferase from Geotalea daltonii (strain DSM 22248 / JCM 15807 / FRC-32) (Geobacter daltonii).